The primary structure comprises 184 residues: Tumor necrosis factor alpha-induced protein 8-like protein 2 (184 aa).

Serine 3 carries the post-translational modification Phosphoserine.

The protein belongs to the TNFAIP8 family. TNFAIP8L2 subfamily. As to quaternary structure, may interact with CASP8; however, such result is unclear since could not reproduce the interaction with CASP8. Interacts with RAC1. In terms of processing, phosphorylated by TAK1/MAP3K7; this phosphorylation triggers association with BTRC and subsequent ubiquitination and degradation. Ubiquitinated in a BTRC-depdent manner; leading to degradation mediated through the proteasome pathway.

Its subcellular location is the cytoplasm. The protein resides in the nucleus. It is found in the lysosome. Its function is as follows. Acts as a negative regulator of innate and adaptive immunity by maintaining immune homeostasis. Plays a regulatory role in the Toll-like signaling pathway by determining the strength of LPS-induced signaling and gene expression. Inhibits TCR-mediated T-cell activation and negatively regulate T-cell function to prevent hyperresponsiveness. Also inhibits autolysosome formation via negatively modulating MTOR activation by interacting with RAC1 and promoting the disassociation of the RAC1-MTOR complex. Plays an essential role in NK-cell biology by acting as a checkpoint and displaying an expression pattern correlating with NK-cell maturation process and by negatively regulating NK-cell maturation and antitumor immunity. Mechanistically, suppresses IL-15-triggered mTOR activity in NK-cells. This is Tumor necrosis factor alpha-induced protein 8-like protein 2 (TNFAIP8L2) from Callithrix jacchus (White-tufted-ear marmoset).